A 427-amino-acid chain; its full sequence is Trigger factor (427 aa).

The PPIase FKBP-type domain maps to 160–240 (TDTVIGDVEK…VKEVKRLELP (81 aa)).

Belongs to the FKBP-type PPIase family. Tig subfamily.

It localises to the cytoplasm. It carries out the reaction [protein]-peptidylproline (omega=180) = [protein]-peptidylproline (omega=0). Its function is as follows. Involved in protein export. Acts as a chaperone by maintaining the newly synthesized protein in an open conformation. Functions as a peptidyl-prolyl cis-trans isomerase. In Chlorobium phaeobacteroides (strain DSM 266 / SMG 266 / 2430), this protein is Trigger factor.